The following is a 240-amino-acid chain: Ribonuclease PH (240 aa).

Phosphate-binding positions include Arg87 and 125 to 127; that span reads GTR.

The protein belongs to the RNase PH family. As to quaternary structure, homohexameric ring arranged as a trimer of dimers.

It catalyses the reaction tRNA(n+1) + phosphate = tRNA(n) + a ribonucleoside 5'-diphosphate. Its function is as follows. Phosphorolytic 3'-5' exoribonuclease that plays an important role in tRNA 3'-end maturation. Removes nucleotide residues following the 3'-CCA terminus of tRNAs; can also add nucleotides to the ends of RNA molecules by using nucleoside diphosphates as substrates, but this may not be physiologically important. Probably plays a role in initiation of 16S rRNA degradation (leading to ribosome degradation) during starvation. The chain is Ribonuclease PH from Pseudomonas fluorescens (strain SBW25).